Reading from the N-terminus, the 105-residue chain is MIKYVLISALLVVAVYSFTIEDNEDALLEEAEDELDTEEERRMALPPGAVCNGHKSDCQCFGAKYKCSCPFLWRFRRSAECHCKKGWAWTAIKKRSCHNRYQWSG.

Residues 1–17 (MIKYVLISALLVVAVYS) form the signal peptide. The propeptide occupies 18-41 (FTIEDNEDALLEEAEDELDTEEER). Disulfide bonds link C51–C67, C58–C97, C60–C83, and C69–C81.

Belongs to the neurotoxin 04 (omega-agtx) family. 01 (type I omega-agtx) subfamily. As to expression, expressed by the venom gland.

It is found in the secreted. Functionally, insecticidal to house crickets. It induces an excitatory slow-onset impact that leads to irreversible spastic paralysis. It also modifies human voltage-gated potassium channel Kv1.5/KCNA5. Most likely, it binds to the voltage-sensing domain of the channel, suggesting it does not block the pore but prevents its opening at physiological membrane potentials. The recombinant peptide binds to the channel in an irreversible manner and slows down the hKv1.5 current activation kinetics. It is not toxic to mice, when intracranially injected (at 0.5 ug/g mouse). The protein is U2-lycotoxin-Ls1b of Lycosa singoriensis (Wolf spider).